We begin with the raw amino-acid sequence, 328 residues long: Sphingolipid delta(4)-desaturase DES1-like (328 aa).

The next 3 membrane-spanning stretches (helical) occupy residues 50-70 (PLAF…ATLL), 78-98 (ILTV…LAIH), and 114-134 (WLGI…FQKY). The short motif at 98–102 (HELSH) is the Histidine box-1 element. Positions 135–139 (HLEHH) match the Histidine box-2 motif. The next 3 membrane-spanning stretches (helical) occupy residues 164–184 (LSKS…PLFL), 192–212 (WEFT…YFFG), and 217–237 (AYLI…GHFI). The Histidine box-3 motif lies at 266 to 270 (HNEHH).

This sequence belongs to the fatty acid desaturase type 1 family. DEGS subfamily.

The protein resides in the endoplasmic reticulum membrane. The catalysed reaction is an N-acylsphinganine + 2 Fe(II)-[cytochrome b5] + O2 + 2 H(+) = an N-acylsphing-4-enine + 2 Fe(III)-[cytochrome b5] + 2 H2O. Functionally, sphingolipid-delta-4-desaturase required for the biosynthesis of delta-4-unsaturated sphingolipids and derivatives. The protein is Sphingolipid delta(4)-desaturase DES1-like of Oryza sativa subsp. japonica (Rice).